Here is a 364-residue protein sequence, read N- to C-terminus: Cell division protein FtsZ 1 (364 aa).

GTP contacts are provided by residues 47–48 (GA), 97–99 (AGG), 134–136 (GTG), Glu165, Arg169, and Asp212.

It belongs to the FtsZ family. Homodimer. Polymerizes to form a dynamic ring structure in a strictly GTP-dependent manner. Interacts directly with several other division proteins.

The protein localises to the cytoplasm. Essential cell division protein that forms a contractile ring structure (Z ring) at the future cell division site. The regulation of the ring assembly controls the timing and the location of cell division. One of the functions of the FtsZ ring is to recruit other cell division proteins to the septum to produce a new cell wall between the dividing cells. Binds GTP and shows GTPase activity. The sequence is that of Cell division protein FtsZ 1 from Methanocaldococcus jannaschii (strain ATCC 43067 / DSM 2661 / JAL-1 / JCM 10045 / NBRC 100440) (Methanococcus jannaschii).